The chain runs to 242 residues: Leucyl/phenylalanyl-tRNA--protein transferase (242 aa).

This sequence belongs to the L/F-transferase family.

It localises to the cytoplasm. The catalysed reaction is N-terminal L-lysyl-[protein] + L-leucyl-tRNA(Leu) = N-terminal L-leucyl-L-lysyl-[protein] + tRNA(Leu) + H(+). It carries out the reaction N-terminal L-arginyl-[protein] + L-leucyl-tRNA(Leu) = N-terminal L-leucyl-L-arginyl-[protein] + tRNA(Leu) + H(+). The enzyme catalyses L-phenylalanyl-tRNA(Phe) + an N-terminal L-alpha-aminoacyl-[protein] = an N-terminal L-phenylalanyl-L-alpha-aminoacyl-[protein] + tRNA(Phe). Functions in the N-end rule pathway of protein degradation where it conjugates Leu, Phe and, less efficiently, Met from aminoacyl-tRNAs to the N-termini of proteins containing an N-terminal arginine or lysine. In Alcanivorax borkumensis (strain ATCC 700651 / DSM 11573 / NCIMB 13689 / SK2), this protein is Leucyl/phenylalanyl-tRNA--protein transferase.